A 435-amino-acid polypeptide reads, in one-letter code: Serine--tRNA ligase (435 aa).

242–244 (TAE) contributes to the L-serine binding site. 273–275 (RSE) serves as a coordination point for ATP. Glutamate 296 serves as a coordination point for L-serine. Position 360–363 (360–363 (EISS)) interacts with ATP. Residue serine 396 participates in L-serine binding.

Belongs to the class-II aminoacyl-tRNA synthetase family. Type-1 seryl-tRNA synthetase subfamily. Homodimer. The tRNA molecule binds across the dimer.

It localises to the cytoplasm. The enzyme catalyses tRNA(Ser) + L-serine + ATP = L-seryl-tRNA(Ser) + AMP + diphosphate + H(+). The catalysed reaction is tRNA(Sec) + L-serine + ATP = L-seryl-tRNA(Sec) + AMP + diphosphate + H(+). Its pathway is aminoacyl-tRNA biosynthesis; selenocysteinyl-tRNA(Sec) biosynthesis; L-seryl-tRNA(Sec) from L-serine and tRNA(Sec): step 1/1. Functionally, catalyzes the attachment of serine to tRNA(Ser). Is also able to aminoacylate tRNA(Sec) with serine, to form the misacylated tRNA L-seryl-tRNA(Sec), which will be further converted into selenocysteinyl-tRNA(Sec). In Vibrio vulnificus (strain YJ016), this protein is Serine--tRNA ligase.